Reading from the N-terminus, the 215-residue chain is Thiamine-phosphate synthase (215 aa).

Residues 43–47 and N78 contribute to the 4-amino-2-methyl-5-(diphosphooxymethyl)pyrimidine site; that span reads QFRDK. D79 and D98 together coordinate Mg(2+). A 4-amino-2-methyl-5-(diphosphooxymethyl)pyrimidine-binding site is contributed by S117. A 2-[(2R,5Z)-2-carboxy-4-methylthiazol-5(2H)-ylidene]ethyl phosphate-binding site is contributed by 143-145; it reads TNS. K146 serves as a coordination point for 4-amino-2-methyl-5-(diphosphooxymethyl)pyrimidine. Residues G174 and 194–195 contribute to the 2-[(2R,5Z)-2-carboxy-4-methylthiazol-5(2H)-ylidene]ethyl phosphate site; that span reads IS.

This sequence belongs to the thiamine-phosphate synthase family. Requires Mg(2+) as cofactor.

The catalysed reaction is 2-[(2R,5Z)-2-carboxy-4-methylthiazol-5(2H)-ylidene]ethyl phosphate + 4-amino-2-methyl-5-(diphosphooxymethyl)pyrimidine + 2 H(+) = thiamine phosphate + CO2 + diphosphate. It catalyses the reaction 2-(2-carboxy-4-methylthiazol-5-yl)ethyl phosphate + 4-amino-2-methyl-5-(diphosphooxymethyl)pyrimidine + 2 H(+) = thiamine phosphate + CO2 + diphosphate. It carries out the reaction 4-methyl-5-(2-phosphooxyethyl)-thiazole + 4-amino-2-methyl-5-(diphosphooxymethyl)pyrimidine + H(+) = thiamine phosphate + diphosphate. The protein operates within cofactor biosynthesis; thiamine diphosphate biosynthesis; thiamine phosphate from 4-amino-2-methyl-5-diphosphomethylpyrimidine and 4-methyl-5-(2-phosphoethyl)-thiazole: step 1/1. In terms of biological role, condenses 4-methyl-5-(beta-hydroxyethyl)thiazole monophosphate (THZ-P) and 2-methyl-4-amino-5-hydroxymethyl pyrimidine pyrophosphate (HMP-PP) to form thiamine monophosphate (TMP). This is Thiamine-phosphate synthase from Lactococcus lactis subsp. lactis (strain IL1403) (Streptococcus lactis).